The sequence spans 116 residues: Large ribosomal subunit protein uL18 (116 aa).

Belongs to the universal ribosomal protein uL18 family. As to quaternary structure, part of the 50S ribosomal subunit; part of the 5S rRNA/L5/L18/L25 subcomplex. Contacts the 5S and 23S rRNAs.

In terms of biological role, this is one of the proteins that bind and probably mediate the attachment of the 5S RNA into the large ribosomal subunit, where it forms part of the central protuberance. The protein is Large ribosomal subunit protein uL18 of Hahella chejuensis (strain KCTC 2396).